Consider the following 54-residue polypeptide: Sperm protamine P3 (54 aa).

A disordered region spans residues 1–54 (RRRRRRGKGKGGKKKKGKKRRRRGRKGKGKGKKKGKRKGKRGGKRRRRRRKGKK).

Gonads.

It is found in the nucleus. It localises to the chromosome. Its function is as follows. Protamines substitute for histones in the chromatin of sperm during the haploid phase of spermatogenesis. They compact sperm DNA into a highly condensed, stable and inactive complex. In Bolinus brandaris (Purple dye murex), this protein is Sperm protamine P3.